The chain runs to 319 residues: Acetyl esterase (319 aa).

The short motif at 91-93 is the Involved in the stabilization of the negatively charged intermediate by the formation of the oxyanion hole element; sequence HGG. Active-site residues include Ser-165, Asp-262, and His-292.

It belongs to the 'GDXG' lipolytic enzyme family. In terms of assembly, homodimer. Interacts with MalT and MelA.

The protein resides in the cytoplasm. Functionally, displays esterase activity towards short chain fatty esters (acyl chain length of up to 8 carbons). Able to hydrolyze triacetylglycerol (triacetin) and tributyrylglycerol (tributyrin), but not trioleylglycerol (triolein) or cholesterol oleate. Negatively regulates MalT activity by antagonizing maltotriose binding. Inhibits MelA galactosidase activity. This Shigella boydii serotype 18 (strain CDC 3083-94 / BS512) protein is Acetyl esterase.